We begin with the raw amino-acid sequence, 177 residues long: Adenine phosphoribosyltransferase (177 aa).

It belongs to the purine/pyrimidine phosphoribosyltransferase family. In terms of assembly, homodimer.

It is found in the cytoplasm. It catalyses the reaction AMP + diphosphate = 5-phospho-alpha-D-ribose 1-diphosphate + adenine. Its pathway is purine metabolism; AMP biosynthesis via salvage pathway; AMP from adenine: step 1/1. Functionally, catalyzes a salvage reaction resulting in the formation of AMP, that is energically less costly than de novo synthesis. The sequence is that of Adenine phosphoribosyltransferase from Chlorobium luteolum (strain DSM 273 / BCRC 81028 / 2530) (Pelodictyon luteolum).